Reading from the N-terminus, the 321-residue chain is CRISPR-associated aCascade subunit Cas7/Csa2 2 (321 aa).

Belongs to the CRISPR-associated protein Cas7/Cst2/DevR family. Subtype I-a/Apern subfamily. In terms of assembly, part of the aCascade ribonucleoprotein complex, minimally composed of Csa2 and Cas5a, which binds crRNA. Other possible components of aCascade in strain P1 are Cas6b (SSO1437) and Csa5 (SSO1443), while SSO1399, Cas5b (SSO1400) and SSO1401 have sometimes been seen weakly associated. Csa2 is probably the major RNA-binding subunit. The Csa2-Cas5a-crRNA complex also binds target DNA homologous to crRNA, probably forming an R-loop. Purified aCascade forms a filament about 6 nm in width.

Functionally, CRISPR (clustered regularly interspaced short palindromic repeat) is an adaptive immune system that provides protection against mobile genetic elements (viruses, transposable elements and conjugative plasmids). CRISPR clusters contain spacers, sequences complementary to antecedent mobile elements, and target invading nucleic acids. CRISPR clusters are transcribed and processed into CRISPR RNA (crRNA). The chain is CRISPR-associated aCascade subunit Cas7/Csa2 2 (csa2b) from Saccharolobus solfataricus (strain ATCC 35092 / DSM 1617 / JCM 11322 / P2) (Sulfolobus solfataricus).